The chain runs to 112 residues: Cytochrome c2 (112 aa).

Heme c is bound by residues C14, C17, H18, and M91.

The protein belongs to the cytochrome c family. Post-translationally, binds 1 heme c group covalently per subunit.

Cytochrome c2 is found mainly in purple, non-sulfur, photosynthetic bacteria where it functions as the electron donor to the oxidized bacteriochlorophyll in the photophosphorylation pathway. However, it may also have a role in the respiratory chain and is found in some non-photosynthetic bacteria. This is Cytochrome c2 (cycA) from Rhodospirillum rubrum.